Here is a 522-residue protein sequence, read N- to C-terminus: tRNA-2-methylthio-N(6)-dimethylallyladenosine synthase (522 aa).

Positions 24-140 (RTYEVKTYGC…LPTLLQRAEH (117 aa)) constitute an MTTase N-terminal domain. [4Fe-4S] cluster-binding residues include cysteine 33, cysteine 69, cysteine 103, cysteine 177, cysteine 181, and cysteine 184. Positions 163–399 (RESAYAGWVS…MVVQEQVCEE (237 aa)) constitute a Radical SAM core domain. Positions 402–473 (QKLIGTTVEL…PFFLIADSGV (72 aa)) constitute a TRAM domain.

Belongs to the methylthiotransferase family. MiaB subfamily. As to quaternary structure, monomer. It depends on [4Fe-4S] cluster as a cofactor.

The protein resides in the cytoplasm. The catalysed reaction is N(6)-dimethylallyladenosine(37) in tRNA + (sulfur carrier)-SH + AH2 + 2 S-adenosyl-L-methionine = 2-methylsulfanyl-N(6)-dimethylallyladenosine(37) in tRNA + (sulfur carrier)-H + 5'-deoxyadenosine + L-methionine + A + S-adenosyl-L-homocysteine + 2 H(+). Catalyzes the methylthiolation of N6-(dimethylallyl)adenosine (i(6)A), leading to the formation of 2-methylthio-N6-(dimethylallyl)adenosine (ms(2)i(6)A) at position 37 in tRNAs that read codons beginning with uridine. In Corynebacterium glutamicum (strain ATCC 13032 / DSM 20300 / JCM 1318 / BCRC 11384 / CCUG 27702 / LMG 3730 / NBRC 12168 / NCIMB 10025 / NRRL B-2784 / 534), this protein is tRNA-2-methylthio-N(6)-dimethylallyladenosine synthase.